The chain runs to 281 residues: 2-dehydro-3-deoxyphosphooctonate aldolase (281 aa).

The protein belongs to the KdsA family.

It is found in the cytoplasm. The catalysed reaction is D-arabinose 5-phosphate + phosphoenolpyruvate + H2O = 3-deoxy-alpha-D-manno-2-octulosonate-8-phosphate + phosphate. It participates in carbohydrate biosynthesis; 3-deoxy-D-manno-octulosonate biosynthesis; 3-deoxy-D-manno-octulosonate from D-ribulose 5-phosphate: step 2/3. Its pathway is bacterial outer membrane biogenesis; lipopolysaccharide biosynthesis. This is 2-dehydro-3-deoxyphosphooctonate aldolase from Azotobacter vinelandii (strain DJ / ATCC BAA-1303).